Here is a 605-residue protein sequence, read N- to C-terminus: MSSPNNQPLSCSLRQLSISPTAPPGDVGTPGSLLSLSSSSSSNTDSSGSSLGSLSLNSNSSGSDNDSKVSSPSREIPSDPPLPRAVPTVRLGRSTSSRSRNSLNLDMKDPSEKPRRSLPTAAGQNNIGSPPTPPGPFPGGLSTDIQEKLKAFHASRSKSMPEVVNKISSPTTPIVGMGQRGSYPLPNSQLAGRLSNSPVKSPNMPESGLAKSLAAARNPLLNRPTSFNRQTRIRRAPPGKLDLSNSNPTSPVSPSSMASRRGLNIPPTLKQAVSETPFSTFSDILDAKSGTLNFKNKAVLNSEGVNFSSGSSFRINMSEIIKLEELGKGNYGVVYKALHQPTGVTMALKEIRLSLEEATFNQIIMELDILHKAVSPYIVDFYGAFFVEGSVFICMEYMDAGSMDKLYAGGIKDEGVLARTAYAVVQGLKTLKEEHNIIHRDVKPTNVLVNSNGQVKLCDFGVSGNLVASISKTNIGCQSYMAPERIRVGGPTNGVLTYTVQADVWSLGLTILEMALGAYPYPPESYTSIFAQLSAICDGDPPSLPDSFSPEARDFVNKCLNKNPSLRPDYHELANHPWLLKYQNADVDMASWAKGALKEKGEKRS.

A compositionally biased stretch (polar residues) spans 1–20 (MSSPNNQPLSCSLRQLSISP). Positions 1–141 (MSSPNNQPLS…TPPGPFPGGL (141 aa)) are disordered. 2 stretches are compositionally biased toward low complexity: residues 31–73 (GSLL…SSPS) and 90–105 (RLGRSTSSRSRNSLNL). The span at 106 to 115 (DMKDPSEKPR) shows a compositional bias: basic and acidic residues. Serine 168 bears the Phosphoserine mark. Positions 188–200 (SQLAGRLSNSPVK) are enriched in polar residues. The tract at residues 188 to 263 (SQLAGRLSNS…PSSMASRRGL (76 aa)) is disordered. The segment covering 244–256 (SNSNPTSPVSPSS) has biased composition (low complexity). Serine 253 is subject to Phosphoserine. The region spanning 320–579 (IIKLEELGKG…YHELANHPWL (260 aa)) is the Protein kinase domain. ATP-binding positions include 326 to 334 (LGKGNYGVV) and lysine 349. Residue aspartate 441 is the Proton acceptor of the active site. The residue at position 469 (serine 469) is a Phosphoserine. At threonine 473 the chain carries Phosphothreonine.

This sequence belongs to the protein kinase superfamily. STE Ser/Thr protein kinase family. MAP kinase kinase subfamily. In terms of processing, dephosphorylated by pyp1 and pyp2.

The enzyme catalyses L-seryl-[protein] + ATP = O-phospho-L-seryl-[protein] + ADP + H(+). It catalyses the reaction L-threonyl-[protein] + ATP = O-phospho-L-threonyl-[protein] + ADP + H(+). The catalysed reaction is L-tyrosyl-[protein] + ATP = O-phospho-L-tyrosyl-[protein] + ADP + H(+). Functionally, dosage-dependent regulator of mitosis with serine/ threonine protein kinase activity. May play a role in the integration of nutritional sensing with the control over entry into mitosis. It may interact with cdc25, wee1 and win1. May activate sty1. The polypeptide is Protein kinase wis1 (wis1) (Schizosaccharomyces pombe (strain 972 / ATCC 24843) (Fission yeast)).